Consider the following 134-residue polypeptide: Ribonuclease VapC1 (134 aa).

The PINc domain maps to 4-123; the sequence is IIDTSIIIAL…LNVKDFKRIQ (120 aa). Positions 6 and 97 each coordinate Mg(2+).

It belongs to the PINc/VapC protein family. The cofactor is Mg(2+).

Toxic component of a type II toxin-antitoxin (TA) system. Has ssRNase activity. Upon expression in E.coli inhibits growth in liquid culture; this toxic effect is neutralized by coexpression with cognate antitoxin VapB1. Its RNase activity is partially inhibited in vitro by VapB1. The chain is Ribonuclease VapC1 from Rickettsia felis (strain ATCC VR-1525 / URRWXCal2) (Rickettsia azadi).